The chain runs to 535 residues: CTP synthase (535 aa).

Positions 1 to 267 (MTKFIFVTGG…DDIVIKKLGL (267 aa)) are amidoligase domain. Ser13 lines the CTP pocket. Ser13 is a UTP binding site. 14–19 (SLGKGI) contributes to the ATP binding site. Tyr54 lines the L-glutamine pocket. Asp71 serves as a coordination point for ATP. Residues Asp71 and Glu141 each contribute to the Mg(2+) site. CTP-binding positions include 148–150 (DIE), 188–193 (KTKPTQ), and Lys224. UTP is bound by residues 188–193 (KTKPTQ) and Lys224. In terms of domain architecture, Glutamine amidotransferase type-1 spans 292–534 (TIGIVGKYVS…IGASLKTNKL (243 aa)). L-glutamine is bound at residue Gly354. Cys381 functions as the Nucleophile; for glutamine hydrolysis in the catalytic mechanism. L-glutamine-binding positions include 382-385 (LGMQ), Glu405, and Arg462. Active-site residues include His507 and Glu509.

Belongs to the CTP synthase family. As to quaternary structure, homotetramer.

It carries out the reaction UTP + L-glutamine + ATP + H2O = CTP + L-glutamate + ADP + phosphate + 2 H(+). It catalyses the reaction L-glutamine + H2O = L-glutamate + NH4(+). The enzyme catalyses UTP + NH4(+) + ATP = CTP + ADP + phosphate + 2 H(+). Its pathway is pyrimidine metabolism; CTP biosynthesis via de novo pathway; CTP from UDP: step 2/2. With respect to regulation, allosterically activated by GTP, when glutamine is the substrate; GTP has no effect on the reaction when ammonia is the substrate. The allosteric effector GTP functions by stabilizing the protein conformation that binds the tetrahedral intermediate(s) formed during glutamine hydrolysis. Inhibited by the product CTP, via allosteric rather than competitive inhibition. Catalyzes the ATP-dependent amination of UTP to CTP with either L-glutamine or ammonia as the source of nitrogen. Regulates intracellular CTP levels through interactions with the four ribonucleotide triphosphates. The protein is CTP synthase of Carboxydothermus hydrogenoformans (strain ATCC BAA-161 / DSM 6008 / Z-2901).